A 242-amino-acid polypeptide reads, in one-letter code: Probable transcriptional regulatory protein BTH_I1015 (242 aa).

Belongs to the TACO1 family.

It is found in the cytoplasm. The protein is Probable transcriptional regulatory protein BTH_I1015 of Burkholderia thailandensis (strain ATCC 700388 / DSM 13276 / CCUG 48851 / CIP 106301 / E264).